A 531-amino-acid polypeptide reads, in one-letter code: Importin subunit alpha-3 (531 aa).

Residues 1–58 form the IBB domain; it reads MSLRPSAKTEVRRNRYKVAVDAEEGRRRREDNLVEIRKNKREENLQKKRFTSSMAFGS. 8 ARM repeats span residues 111-153, 154-198, 199-236, 237-281, 282-321, 322-364, 365-405, and 406-447; these read INEV…TSEN, TNVI…CRDL, VLSY…RGKP, PPAF…DKIQ, AVIE…DDLQ, TQMV…NADQ, IQAV…GGTH, and DQIK…VVGE. Positions 500–524 are disordered; the sequence is DNEEEGNDENHAPQSGFQFGSTNVP. The segment covering 511-524 has biased composition (polar residues); sequence APQSGFQFGSTNVP.

It belongs to the importin alpha family. Forms a complex with importin subunit beta-1. Interacts with PRL1. Interacts with A.tumefaciens VirD2 and VirE2.

Its subcellular location is the nucleus. Functionally, binds to conventional NLS motifs and mediates nuclear protein import across the nuclear envelope. Acts as a cellular receptor for the nuclear import of the virD2 protein of Agrobacterium, but is not essential for Agrobacterium-mediated root transformation. May be involved in the regulation of pathogen-induced salicylic acid accumulation. The chain is Importin subunit alpha-3 from Arabidopsis thaliana (Mouse-ear cress).